The sequence spans 314 residues: Homoserine O-acetyltransferase (314 aa).

The active-site Acyl-thioester intermediate is cysteine 142. The substrate site is built by lysine 163 and serine 192. The active-site Proton acceptor is the histidine 235. Residue glutamate 237 is part of the active site. Substrate is bound at residue arginine 249.

Belongs to the MetA family.

The protein resides in the cytoplasm. The catalysed reaction is L-homoserine + acetyl-CoA = O-acetyl-L-homoserine + CoA. The protein operates within amino-acid biosynthesis; L-methionine biosynthesis via de novo pathway; O-acetyl-L-homoserine from L-homoserine: step 1/1. Transfers an acetyl group from acetyl-CoA to L-homoserine, forming acetyl-L-homoserine. The polypeptide is Homoserine O-acetyltransferase (Streptococcus mutans serotype c (strain ATCC 700610 / UA159)).